The chain runs to 127 residues: MARIAGVDLPREKRIEVALQYIYGIGKTTAQAICHRANVDVTTRTKDLTDDEVRRIRETIEQAVKVEGDLRREISLNIKRLMDLGCYRGLRHRKGLPVRGQRTHTNARTRKGPKKGLVRKAAAPAPK.

The segment covering 95–118 has biased composition (basic residues); that stretch reads GLPVRGQRTHTNARTRKGPKKGLV. Positions 95 to 127 are disordered; it reads GLPVRGQRTHTNARTRKGPKKGLVRKAAAPAPK.

The protein belongs to the universal ribosomal protein uS13 family. In terms of assembly, part of the 30S ribosomal subunit. Forms a loose heterodimer with protein S19. Forms two bridges to the 50S subunit in the 70S ribosome.

In terms of biological role, located at the top of the head of the 30S subunit, it contacts several helices of the 16S rRNA. In the 70S ribosome it contacts the 23S rRNA (bridge B1a) and protein L5 of the 50S subunit (bridge B1b), connecting the 2 subunits; these bridges are implicated in subunit movement. Contacts the tRNAs in the A and P-sites. This chain is Small ribosomal subunit protein uS13, found in Anaeromyxobacter sp. (strain Fw109-5).